Reading from the N-terminus, the 366-residue chain is 5-hydroxytryptamine receptor 1F (366 aa).

The Extracellular portion of the chain corresponds to 1-24 (MDFLNSSDQNLTSEELLNRMPSKI). Residues Asn5 and Asn10 are each glycosylated (N-linked (GlcNAc...) asparagine). The helical transmembrane segment at 25–49 (LVSLTLSGLALMTTTINCLVITAII) threads the bilayer. The Cytoplasmic segment spans residues 50 to 59 (VTRKLHHPAN). The helical transmembrane segment at 60-81 (YLICSLAVTDFLVAVLVMPFSI) threads the bilayer. At 82-96 (VYIVRESWIMGQGLC) the chain is on the extracellular side. Cys96 and Cys172 are oxidised to a cystine. The chain crosses the membrane as a helical span at residues 97–119 (DLWLSVDIICCTCSILHLSAIAL). The serotonin site is built by Asp103 and Cys107. The short motif at 120–122 (DRY) is the DRY motif; important for ligand-induced conformation changes element. Residues 120–139 (DRYRAITDAVEYARKRTPRH) are Cytoplasmic-facing. The chain crosses the membrane as a helical span at residues 140-159 (AGITITTVWVISVFISVPPL). At 160–178 (FWRHQGNSRDDQCIIKHDH) the chain is on the extracellular side. Residues 179–202 (IVSTIYSTFGAFYIPLVLILILYY) traverse the membrane as a helical segment. Over 203–291 (KIYRAARTLY…KISGTRERKA (89 aa)) the chain is Cytoplasmic. The helical transmembrane segment at 292–315 (ATTLGLILGAFVICWLPFFVKELV) threads the bilayer. Residues 316–327 (VNICEKCKISEE) lie on the Extracellular side of the membrane. A helical membrane pass occupies residues 328–350 (MSNFLAWLGYLNSLINPLIYTIF). An NPxxY motif; important for ligand-induced conformation changes and signaling motif is present at residues 343–347 (NPLIY). The Cytoplasmic segment spans residues 351-366 (NEDFKKAFQKLVRCRN).

The protein belongs to the G-protein coupled receptor 1 family.

The protein localises to the cell membrane. Functionally, G-protein coupled receptor for 5-hydroxytryptamine (serotonin). Also functions as a receptor for various alkaloids and psychoactive substances. Ligand binding causes a conformation change that triggers signaling via guanine nucleotide-binding proteins (G proteins) and modulates the activity of downstream effectors, such as adenylate cyclase. HTR1F is coupled to G(i)/G(o) G alpha proteins and mediates inhibitory neurotransmission by inhibiting adenylate cyclase activity. This chain is 5-hydroxytryptamine receptor 1F (Htr1f), found in Rattus norvegicus (Rat).